The chain runs to 1253 residues: Elongator complex protein 1 (1253 aa).

Residues 830–1253 (VDVNMLFDHA…KPFEKLSILI (424 aa)) are mediates dimerization. A compositionally biased stretch (polar residues) spans 1126-1141 (YTKSSNSSKMTRNTSK). A disordered region spans residues 1126–1153 (YTKSSNSSKMTRNTSKNNRRLERKRARG). The segment at 1137-1155 (RNTSKNNRRLERKRARGKK) is required for binding to tRNA. Positions 1142–1153 (NNRRLERKRARG) are enriched in basic residues.

Belongs to the ELP1/IKA1 family. As to quaternary structure, homodimer. Component of the elongator complex.

The protein resides in the cytoplasm. It functions in the pathway tRNA modification; 5-methoxycarbonylmethyl-2-thiouridine-tRNA biosynthesis. Functionally, component of the elongator complex, a multiprotein complex which is required for multiple tRNA modifications, including mcm5U (5-methoxycarbonylmethyl uridine), mcm5s2U (5-methoxycarbonylmethyl-2-thiouridine), and ncm5U (5-carbamoylmethyl uridine). The elongator complex catalyzes formation of carboxymethyluridine in the wobble base at position 34 in tRNAs. ELP1 binds to tRNA, mediating interaction of the elongator complex with tRNA. This chain is Elongator complex protein 1, found in Schizosaccharomyces pombe (strain 972 / ATCC 24843) (Fission yeast).